We begin with the raw amino-acid sequence, 155 residues long: uncharacterized protein (155 aa).

Positions 1-23 (MRLMRNLMNALLLGAAASSLAVA) are cleaved as a signal peptide. A disulfide bridge connects residues C86 and C91.

The protein belongs to the ivy family.

It is found in the periplasm. This is an uncharacterized protein from Pseudomonas aeruginosa (strain ATCC 15692 / DSM 22644 / CIP 104116 / JCM 14847 / LMG 12228 / 1C / PRS 101 / PAO1).